We begin with the raw amino-acid sequence, 273 residues long: Dermonecrotic toxin LhSicTox-alphaIA2bii (273 aa).

Residue H5 is part of the active site. Residues E25 and D27 each contribute to the Mg(2+) site. H41 functions as the Nucleophile in the catalytic mechanism. 2 disulfide bridges follow: C45-C51 and C47-C190. Mg(2+) is bound at residue D85.

This sequence belongs to the arthropod phospholipase D family. Class II subfamily. Requires Mg(2+) as cofactor. In terms of tissue distribution, expressed by the venom gland.

It is found in the secreted. It carries out the reaction an N-(acyl)-sphingosylphosphocholine = an N-(acyl)-sphingosyl-1,3-cyclic phosphate + choline. The catalysed reaction is an N-(acyl)-sphingosylphosphoethanolamine = an N-(acyl)-sphingosyl-1,3-cyclic phosphate + ethanolamine. It catalyses the reaction a 1-acyl-sn-glycero-3-phosphocholine = a 1-acyl-sn-glycero-2,3-cyclic phosphate + choline. The enzyme catalyses a 1-acyl-sn-glycero-3-phosphoethanolamine = a 1-acyl-sn-glycero-2,3-cyclic phosphate + ethanolamine. In terms of biological role, dermonecrotic toxins cleave the phosphodiester linkage between the phosphate and headgroup of certain phospholipids (sphingolipid and lysolipid substrates), forming an alcohol (often choline) and a cyclic phosphate. This toxin acts on sphingomyelin (SM). It may also act on ceramide phosphoethanolamine (CPE), lysophosphatidylcholine (LPC) and lysophosphatidylethanolamine (LPE), but not on lysophosphatidylserine (LPS), and lysophosphatidylglycerol (LPG). It acts by transphosphatidylation, releasing exclusively cyclic phosphate products as second products. Induces dermonecrosis, hemolysis, increased vascular permeability, edema, inflammatory response, and platelet aggregation. In Loxosceles hirsuta (Recluse spider), this protein is Dermonecrotic toxin LhSicTox-alphaIA2bii.